We begin with the raw amino-acid sequence, 239 residues long: Trimethylguanosine synthase (239 aa).

It belongs to the methyltransferase superfamily. Trimethylguanosine synthase family. As to quaternary structure, monomer. Interacts with mug174; both proteins are required to maintain Cajal body integrity.

It localises to the nucleus. The protein resides in the cajal body. The catalysed reaction is a 5'-end (N(7)-methyl 5'-triphosphoguanosine)-ribonucleoside in snRNA + S-adenosyl-L-methionine = a 5'-end (N(2),N(7)-dimethyl 5'-triphosphoguanosine)-ribonucleoside in snRNA + S-adenosyl-L-homocysteine + H(+). It carries out the reaction a 5'-end (N(7)-methyl 5'-triphosphoguanosine)-ribonucleoside in snoRNA + S-adenosyl-L-methionine = a 5'-end (N(2),N(7)-dimethyl 5'-triphosphoguanosine)-ribonucleoside in snoRNA + S-adenosyl-L-homocysteine + H(+). It catalyses the reaction a 5'-end (N(2),N(7)-dimethyl 5'-triphosphoguanosine)-ribonucleoside in snRNA + S-adenosyl-L-methionine = a 5'-end (N(2),N(2),N(7)-trimethyl 5'-triphosphoguanosine)-ribonucleoside in snRNA + S-adenosyl-L-homocysteine + H(+). The enzyme catalyses a 5'-end (N(2),N(7)-dimethyl 5'-triphosphoguanosine)-ribonucleoside in snoRNA + S-adenosyl-L-methionine = a 5'-end (N(2),N(2),N(7)-trimethyl 5'-triphosphoguanosine)-ribonucleoside in snoRNA + S-adenosyl-L-homocysteine + H(+). With respect to regulation, substrate inhibited by S-adenosyl-L-homocysteine. Catalyzes the two serial methylation steps for the conversion of the 7-monomethylguanosine (m(7)G) caps of snRNAs and snoRNAs to a 2,2,7-trimethylguanosine (m(2,2,7)G) cap structure. The enzyme is specific for guanine, and N7 methylation must precede N2 methylation. Required for pre-mRNA splicing, pre-rRNA processing and small ribosomal subunit synthesis. Involved in nucleolar structural organization. The chain is Trimethylguanosine synthase (tgs1) from Schizosaccharomyces pombe (strain 972 / ATCC 24843) (Fission yeast).